A 302-amino-acid polypeptide reads, in one-letter code: Ornithine carbamoyltransferase (302 aa).

Residues 52 to 55 (STRT), Gln-79, Arg-103, and 130 to 133 (HPCQ) contribute to the carbamoyl phosphate site. L-ornithine is bound by residues Asn-161, Asp-221, and 225–226 (SM). Carbamoyl phosphate contacts are provided by residues 261 to 262 (CL) and Arg-289.

This sequence belongs to the aspartate/ornithine carbamoyltransferase superfamily. OTCase family.

Its subcellular location is the cytoplasm. It catalyses the reaction carbamoyl phosphate + L-ornithine = L-citrulline + phosphate + H(+). It functions in the pathway amino-acid biosynthesis; L-arginine biosynthesis; L-arginine from L-ornithine and carbamoyl phosphate: step 1/3. Its function is as follows. Reversibly catalyzes the transfer of the carbamoyl group from carbamoyl phosphate (CP) to the N(epsilon) atom of ornithine (ORN) to produce L-citrulline. The chain is Ornithine carbamoyltransferase from Methanosarcina acetivorans (strain ATCC 35395 / DSM 2834 / JCM 12185 / C2A).